A 275-amino-acid chain; its full sequence is Octanoyl-[GcvH]:protein N-octanoyltransferase (275 aa).

The BPL/LPL catalytic domain occupies 42–246; sequence GQSQPVVRLW…ALQAFGSRLE (205 aa). Cys-145 serves as the catalytic Acyl-thioester intermediate.

It belongs to the octanoyltransferase LipL family.

It catalyses the reaction N(6)-octanoyl-L-lysyl-[glycine-cleavage complex H protein] + L-lysyl-[lipoyl-carrier protein] = N(6)-octanoyl-L-lysyl-[lipoyl-carrier protein] + L-lysyl-[glycine-cleavage complex H protein]. The protein operates within protein modification; protein lipoylation via endogenous pathway; protein N(6)-(lipoyl)lysine from octanoyl-[acyl-carrier-protein]. Its function is as follows. Catalyzes the amidotransfer (transamidation) of the octanoyl moiety from octanoyl-GcvH to the lipoyl domain of the E2 subunit of lipoate-dependent enzymes. The chain is Octanoyl-[GcvH]:protein N-octanoyltransferase from Anoxybacillus flavithermus (strain DSM 21510 / WK1).